Reading from the N-terminus, the 3096-residue chain is Unconventional myosin-XVB (3096 aa).

4 disordered regions span residues 1 to 330 (MGRN…GPED), 389 to 489 (RPPE…GWGR), 508 to 540 (GGMPRASPGGRSPQVPTSPVPGDPFDQEDETPD), and 553 to 649 (AGRA…GPRL). A compositionally biased stretch (low complexity) spans 19–33 (ASGEQESGSASADGA). Residues 34–50 (PSRERRSDRGQADRAKP) show a composition bias toward basic and acidic residues. Basic residues predominate over residues 124–143 (RRRRKRKDKGPSARRGRRTP). Composition is skewed to basic and acidic residues over residues 212-222 (DWPHADTRGRE) and 261-288 (TFEDSSRAPRDTGPAKDASDNRAQRGAE). Positions 307–330 (AVGQVPAAAGEGEAGAAAGAGPED) are enriched in low complexity. Residues 406-416 (WGRRKPDEGRG) are compositionally biased toward basic and acidic residues. Residues 417 to 426 (HGRGSKGRGR) are compositionally biased toward basic residues. A compositionally biased stretch (basic and acidic residues) spans 427–489 (GKADEGRGHE…HQRGYEGWGR (63 aa)). Positions 720 to 1394 (EDMEDLARLR…GWQRLEELRD (675 aa)) constitute a Myosin motor domain. 818 to 825 (GHSGSGKT) serves as a coordination point for ATP. The segment at 1273–1295 (LEDLIARLGRSHVYFIQCLTPNP) is actin-binding. Residues 1414–1443 (RQRVLPRMQARMRGFQARKRYLRRRAALGQ) enclose the IQ domain. Residues 1551–1702 (RPGQPLAKPL…PTQLEWLAGW (152 aa)) form the MyTH4 1 domain. Disordered regions lie at residues 1802 to 1833 (PGIQAPSLPPGPPPGPAPTLPSRDHTGEVQRS), 1963 to 2026 (MQQR…PKSF), and 2040 to 2262 (QITV…LPED). Pro residues predominate over residues 1808–1820 (SLPPGPPPGPAPT). Residues 1963 to 1980 (MQQRQQQARASEAASQAS) show a composition bias toward low complexity. Acidic residues predominate over residues 2059–2076 (AQEEEEEEEEEEEQEEQE). Over residues 2102 to 2116 (APKEAEAEPAKETAA) the composition is skewed to basic and acidic residues. Over residues 2159–2170 (GPVPVPVQPSRP) the composition is skewed to pro residues. The segment covering 2176–2185 (RKIDPKDEAL) has biased composition (basic and acidic residues). Composition is skewed to pro residues over residues 2199-2217 (MLSPSPGKGPPPAVAPRPK) and 2247-2261 (HTPPPPPAPPLPLPE). The SH3 domain maps to 2481-2542 (KDSGYVIALR…PADIVQPAAA (62 aa)). The tract at residues 2548–2567 (SKEQRSGWHKGQLSNGEPGL) is disordered. The region spanning 2643 to 2789 (YTKAPIQESL…PPPGEMKAFL (147 aa)) is the MyTH4 2 domain. Residues 2795–3096 (RLLLIHLPGG…ASCTEWPSIN (302 aa)) form the FERM domain.

Belongs to the TRAFAC class myosin-kinesin ATPase superfamily. Myosin family. Detected in brain, stomach and kidney.

Its subcellular location is the cytoplasm. The protein is Unconventional myosin-XVB of Homo sapiens (Human).